A 166-amino-acid polypeptide reads, in one-letter code: NADH-quinone oxidoreductase subunit B 1 (166 aa).

Cys39, Cys40, Cys106, and Cys135 together coordinate [4Fe-4S] cluster.

This sequence belongs to the complex I 20 kDa subunit family. As to quaternary structure, NDH-1 is composed of 14 different subunits. Subunits NuoB, C, D, E, F, and G constitute the peripheral sector of the complex. [4Fe-4S] cluster is required as a cofactor.

It localises to the cell membrane. It carries out the reaction a quinone + NADH + 5 H(+)(in) = a quinol + NAD(+) + 4 H(+)(out). In terms of biological role, NDH-1 shuttles electrons from NADH, via FMN and iron-sulfur (Fe-S) centers, to quinones in the respiratory chain. The immediate electron acceptor for the enzyme in this species is believed to be a menaquinone. Couples the redox reaction to proton translocation (for every two electrons transferred, four hydrogen ions are translocated across the cytoplasmic membrane), and thus conserves the redox energy in a proton gradient. The polypeptide is NADH-quinone oxidoreductase subunit B 1 (Symbiobacterium thermophilum (strain DSM 24528 / JCM 14929 / IAM 14863 / T)).